The chain runs to 389 residues: ATP phosphoribosyltransferase regulatory subunit (389 aa).

It belongs to the class-II aminoacyl-tRNA synthetase family. HisZ subfamily. As to quaternary structure, heteromultimer composed of HisG and HisZ subunits.

Its subcellular location is the cytoplasm. It functions in the pathway amino-acid biosynthesis; L-histidine biosynthesis; L-histidine from 5-phospho-alpha-D-ribose 1-diphosphate: step 1/9. Required for the first step of histidine biosynthesis. May allow the feedback regulation of ATP phosphoribosyltransferase activity by histidine. In Moorella thermoacetica (strain ATCC 39073 / JCM 9320), this protein is ATP phosphoribosyltransferase regulatory subunit.